The primary structure comprises 194 residues: Segregation and condensation protein B (194 aa).

It belongs to the ScpB family. Homodimer. Homodimerization may be required to stabilize the binding of ScpA to the Smc head domains. Component of a cohesin-like complex composed of ScpA, ScpB and the Smc homodimer, in which ScpA and ScpB bind to the head domain of Smc. The presence of the three proteins is required for the association of the complex with DNA.

It localises to the cytoplasm. Its function is as follows. Participates in chromosomal partition during cell division. May act via the formation of a condensin-like complex containing Smc and ScpA that pull DNA away from mid-cell into both cell halves. This is Segregation and condensation protein B from Brevibacillus brevis (strain 47 / JCM 6285 / NBRC 100599).